A 197-amino-acid polypeptide reads, in one-letter code: Holliday junction branch migration complex subunit RuvA (197 aa).

The domain I stretch occupies residues Met-1–Arg-63. The interval Ser-64–Val-142 is domain II. The flexible linker stretch occupies residues Ala-143–Ser-147. The domain III stretch occupies residues Ala-148–Lys-197.

This sequence belongs to the RuvA family. Homotetramer. Forms an RuvA(8)-RuvB(12)-Holliday junction (HJ) complex. HJ DNA is sandwiched between 2 RuvA tetramers; dsDNA enters through RuvA and exits via RuvB. An RuvB hexamer assembles on each DNA strand where it exits the tetramer. Each RuvB hexamer is contacted by two RuvA subunits (via domain III) on 2 adjacent RuvB subunits; this complex drives branch migration. In the full resolvosome a probable DNA-RuvA(4)-RuvB(12)-RuvC(2) complex forms which resolves the HJ.

The protein localises to the cytoplasm. The RuvA-RuvB-RuvC complex processes Holliday junction (HJ) DNA during genetic recombination and DNA repair, while the RuvA-RuvB complex plays an important role in the rescue of blocked DNA replication forks via replication fork reversal (RFR). RuvA specifically binds to HJ cruciform DNA, conferring on it an open structure. The RuvB hexamer acts as an ATP-dependent pump, pulling dsDNA into and through the RuvAB complex. HJ branch migration allows RuvC to scan DNA until it finds its consensus sequence, where it cleaves and resolves the cruciform DNA. In Streptococcus pneumoniae serotype 19F (strain G54), this protein is Holliday junction branch migration complex subunit RuvA.